Consider the following 231-residue polypeptide: Maleylacetoacetate isomerase maiA (231 aa).

The GST N-terminal domain maps to 7 to 93; the sequence is PKVTLYTYFR…YLEEITPASS (87 aa). Residues 102 to 224 form the GST C-terminal domain; that stretch reads NPEARAVVRT…HWRTQPDTPE (123 aa).

The protein belongs to the GST superfamily. Zeta family.

It carries out the reaction 4-maleylacetoacetate = 4-fumarylacetoacetate. The protein operates within amino-acid degradation; L-phenylalanine degradation; acetoacetate and fumarate from L-phenylalanine: step 5/6. Functionally, maleylacetoacetate isomerase; part of the L-tyrosine degradation gene cluster that mediates the biosynthesis of the brownish pigment pyomelanin as an alternative melanin. The 4-hydroxyphenylpyruvate dioxygenase hppD catalyzes the conversion of 4-hydroxyphenylpyruvate to homogentisic acid (HGA). The protein hmgX is crucial for this conversion and thus, probably functions as an accessory factor to mediate specific activity of hppD. The homogentisate 1,2-dioxygenase hmgA is then involved in the cleavage of the aromatic ring of HGA and its conversion to 4-maleylacetoacetate. When hmgA activity is lowered by the cell wall integrity (CWI) signaling pathway, HGA accumulates and leads to the production of pyomelanin through benzoquinone acetic acid after oxidation and polymerization. On the opposite, in non-stress conditions, both hppD and hmgA activities are balanced and HGA is degraded into 4-maleylacetoacetate. 4-maleylacetoacetate is further converted to 4-fumarylacetoacetate by the maleylacetoacetate isomerase maiA, which is degraded into fumarate and acetoacetate by the fumarylacetoacetase fahA. This Aspergillus fumigatus (strain ATCC MYA-4609 / CBS 101355 / FGSC A1100 / Af293) (Neosartorya fumigata) protein is Maleylacetoacetate isomerase maiA.